We begin with the raw amino-acid sequence, 511 residues long: 2,3-bisphosphoglycerate-independent phosphoglycerate mutase (511 aa).

Residue Asp-12 participates in Mn(2+) binding. Tyr-36 bears the Phosphotyrosine mark. Ser-62 serves as a coordination point for Mn(2+). The Phosphoserine intermediate role is filled by Ser-62. Substrate contacts are provided by residues His-123, 153 to 154 (RD), Arg-185, Arg-191, 261 to 264 (RPDR), and Lys-336. Asp-403, His-407, Asp-444, His-445, and His-462 together coordinate Mn(2+).

The protein belongs to the BPG-independent phosphoglycerate mutase family. In terms of assembly, monomer. Mn(2+) serves as cofactor.

The catalysed reaction is (2R)-2-phosphoglycerate = (2R)-3-phosphoglycerate. Its pathway is carbohydrate degradation; glycolysis; pyruvate from D-glyceraldehyde 3-phosphate: step 3/5. Functionally, essential for rapid growth and for sporulation. Catalyzes the interconversion of 2-phosphoglycerate and 3-phosphoglycerate. In Bacillus pumilus (strain SAFR-032), this protein is 2,3-bisphosphoglycerate-independent phosphoglycerate mutase.